Consider the following 112-residue polypeptide: Integration host factor subunit alpha (112 aa).

The protein belongs to the bacterial histone-like protein family. In terms of assembly, heterodimer of an alpha and a beta chain.

Its function is as follows. This protein is one of the two subunits of integration host factor, a specific DNA-binding protein that functions in genetic recombination as well as in transcriptional and translational control. The protein is Integration host factor subunit alpha of Sinorhizobium fredii (strain NBRC 101917 / NGR234).